Consider the following 118-residue polypeptide: DNA-binding protein MmarC6_0793 (118 aa).

Basic and acidic residues predominate over residues 1–12; it reads MNPEEIRQRRLQ. The segment at 1 to 33 is disordered; the sequence is MNPEEIRQRRLQEMQAKAQEQGAQDPEAQRQMQ. The segment covering 24–33 has biased composition (low complexity); that stretch reads QDPEAQRQMQ.

It belongs to the PDCD5 family.

This is DNA-binding protein MmarC6_0793 from Methanococcus maripaludis (strain C6 / ATCC BAA-1332).